The following is a 367-amino-acid chain: Multifunctional tryptophan biosynthesis protein (367 aa).

Positions 7 to 201 (NVVMIDNYDS…LNVSGGYWEE (195 aa)) constitute a Glutamine amidotransferase type-1 domain. 58–60 (GPG) lines the L-glutamine pocket. Catalysis depends on Cys86, which acts as the Nucleophile; for GATase activity. Residues Gln90 and 136–137 (SL) each bind L-glutamine. Residues His175 and Glu177 each act as for GATase activity in the active site. Residues 209-367 (RKESILEKIY…TVLLIVKMLS (159 aa)) are indole-3-glycerol phosphate synthase.

In terms of assembly, tetramer of two components I and two components II.

It carries out the reaction chorismate + L-glutamine = anthranilate + pyruvate + L-glutamate + H(+). The enzyme catalyses 1-(2-carboxyphenylamino)-1-deoxy-D-ribulose 5-phosphate + H(+) = (1S,2R)-1-C-(indol-3-yl)glycerol 3-phosphate + CO2 + H2O. Its pathway is amino-acid biosynthesis; L-tryptophan biosynthesis; L-tryptophan from chorismate: step 1/5. It participates in amino-acid biosynthesis; L-tryptophan biosynthesis; L-tryptophan from chorismate: step 4/5. This chain is Multifunctional tryptophan biosynthesis protein, found in Pichia angusta (Yeast).